A 1025-amino-acid polypeptide reads, in one-letter code: Multidrug resistance protein MdtC (1025 aa).

Helical transmembrane passes span 3–23, 333–353, 360–380, 387–407, 431–451, 463–483, 528–548, 853–873, 875–895, 897–917, 953–973, and 984–1004; these read FFALFIYRPVATILLSVAITL, EVEQTLIISVALVILVVFLFL, IIPAVAVPVSLIGTFAAMYLC, LSLMALTIATGFVVDDAIVVL, VGFTVLSMSLSLVAVFLPLLL, FAVTLSVAIGISLLVSLTLTP, LVGVVLLGTIALNIWLYISIP, VILIIAAIATVYIVLGILYES, VHPLTILSTLPSAGVGALLAL, LFNAPFSLIALIGIMLLIGIV, PIMMTTLAALFGALPLVLSGG, and ITIVGGLVMSQLLTLYTTPVV.

Belongs to the resistance-nodulation-cell division (RND) (TC 2.A.6) family. MdtC subfamily. As to quaternary structure, part of a tripartite efflux system composed of MdtA, MdtB and MdtC. MdtC forms a heteromultimer with MdtB.

Its subcellular location is the cell inner membrane. The MdtABC tripartite complex confers resistance against novobiocin and deoxycholate. The sequence is that of Multidrug resistance protein MdtC from Escherichia coli (strain SMS-3-5 / SECEC).